The following is a 456-amino-acid chain: tRNA-2-methylthio-N(6)-dimethylallyladenosine synthase (456 aa).

Positions 19–137 constitute an MTTase N-terminal domain; that stretch reads KHFFIETWGC…FPEYLHRVQV (119 aa). [4Fe-4S] cluster contacts are provided by C28, C64, C98, C174, C178, and C181. The region spanning 160–392 is the Radical SAM core domain; the sequence is RKSNVKAFVT…AVNEGIVVGN (233 aa). The TRAM domain occupies 393-456; sequence KAAEGKIYEV…SFSLVGEVVE (64 aa).

This sequence belongs to the methylthiotransferase family. MiaB subfamily. In terms of assembly, monomer. It depends on [4Fe-4S] cluster as a cofactor.

It localises to the cytoplasm. It carries out the reaction N(6)-dimethylallyladenosine(37) in tRNA + (sulfur carrier)-SH + AH2 + 2 S-adenosyl-L-methionine = 2-methylsulfanyl-N(6)-dimethylallyladenosine(37) in tRNA + (sulfur carrier)-H + 5'-deoxyadenosine + L-methionine + A + S-adenosyl-L-homocysteine + 2 H(+). In terms of biological role, catalyzes the methylthiolation of N6-(dimethylallyl)adenosine (i(6)A), leading to the formation of 2-methylthio-N6-(dimethylallyl)adenosine (ms(2)i(6)A) at position 37 in tRNAs that read codons beginning with uridine. The protein is tRNA-2-methylthio-N(6)-dimethylallyladenosine synthase of Clostridium botulinum (strain Eklund 17B / Type B).